The chain runs to 128 residues: Large ribosomal subunit protein bL12 (128 aa).

This sequence belongs to the bacterial ribosomal protein bL12 family. In terms of assembly, homodimer. Part of the ribosomal stalk of the 50S ribosomal subunit. Forms a multimeric L10(L12)X complex, where L10 forms an elongated spine to which 2 to 4 L12 dimers bind in a sequential fashion. Binds GTP-bound translation factors.

Its function is as follows. Forms part of the ribosomal stalk which helps the ribosome interact with GTP-bound translation factors. Is thus essential for accurate translation. The sequence is that of Large ribosomal subunit protein bL12 from Desulfovibrio desulfuricans (strain ATCC 27774 / DSM 6949 / MB).